The following is a 427-amino-acid chain: Piwi protein (427 aa).

The interval 38–167 is mid domain; sequence PYEVPSLKYN…VQFVSKLGGK (130 aa). In terms of domain architecture, Piwi spans 110 to 406; that stretch reads GIMLVLPEYN…VAGIIANVNR (297 aa). Residues 118–124 are binds 5'-phosphorylated end of guide DNA; that stretch reads YNTPLYY. A binds target DNA region spans residues 147–148; that stretch reads RN. Positions 150-155 are binds guide DNA; sequence TFYVDN. A divalent metal cation contacts are provided by Q159 and L427. The PIWI domain stretch occupies residues 168-427; the sequence is PWILNVDPEK…RSLQTNPWFL (260 aa).

This sequence belongs to the argonaute family. Short pAgo subfamily. Homodimer probably stabilized by DNA. Each subunit is capable of interacting with a DNA molecule. Requires a divalent metal cation as cofactor.

Its function is as follows. Might play a role in defense against invading genetic elements, using short nucleic acid sequences as guides to bind complementary target strands, resulting in slicing of the target nucleic acid. Binds nucleic acids with decreasing affinity in the following order; ssDNA, ssRNA, dsDNA, RNA-DNA, RNA-RNA. Association of the 5' seed region of the guide strand (nucleotides 2-7) with AfPiwi increases affinity for the corresponding target strand; the greatest increase in affinity is for guide DNA with target RNA. The sequence is that of Piwi protein from Archaeoglobus fulgidus (strain ATCC 49558 / DSM 4304 / JCM 9628 / NBRC 100126 / VC-16).